We begin with the raw amino-acid sequence, 553 residues long: Glycerol kinase 2 (553 aa).

T20 is a substrate binding site. Position 24 (R24) interacts with ATP. R94, Y148, and D259 together coordinate substrate. ATP contacts are provided by residues T281, G326, and 427 to 431 (GMTNN). The helical transmembrane segment at 526–546 (IFSSMPLGFFIVSSMVMLIGA) threads the bilayer.

The protein belongs to the FGGY kinase family. As to quaternary structure, interacts with ARMC12 and PLD6.

The protein localises to the mitochondrion outer membrane. It is found in the cytoplasm. The enzyme catalyses glycerol + ATP = sn-glycerol 3-phosphate + ADP + H(+). It participates in polyol metabolism; glycerol degradation via glycerol kinase pathway; sn-glycerol 3-phosphate from glycerol: step 1/1. Its function is as follows. Key enzyme in the regulation of glycerol uptake and metabolism. Essential for male fertility and sperm mitochondrial sheath formation. Required for proper arrangement of crescent-like mitochondria to form the mitochondrial sheath during spermatogenesis. Can induce mitochondrial clustering through interactions with PLD6 and up-regulation of phosphatidic acid synthesis in the mitochondria. The polypeptide is Glycerol kinase 2 (GK2) (Macaca fascicularis (Crab-eating macaque)).